The following is a 402-amino-acid chain: Homoserine O-acetyltransferase (402 aa).

The 322-residue stretch at 38–359 (NAVLVCHALT…HGHDAFLVEP (322 aa)) folds into the AB hydrolase-1 domain. Ser146 serves as the catalytic Nucleophile. Arg217 provides a ligand contact to substrate. Residues Asp319 and His352 contribute to the active site. Asp353 contributes to the substrate binding site.

It belongs to the AB hydrolase superfamily. MetX family. Homodimer.

The protein localises to the cytoplasm. It carries out the reaction L-homoserine + acetyl-CoA = O-acetyl-L-homoserine + CoA. It functions in the pathway amino-acid biosynthesis; L-methionine biosynthesis via de novo pathway; O-acetyl-L-homoserine from L-homoserine: step 1/1. Functionally, transfers an acetyl group from acetyl-CoA to L-homoserine, forming acetyl-L-homoserine. This Haloarcula marismortui (strain ATCC 43049 / DSM 3752 / JCM 8966 / VKM B-1809) (Halobacterium marismortui) protein is Homoserine O-acetyltransferase.